Consider the following 172-residue polypeptide: uncharacterized protein (172 aa).

It belongs to the flavoredoxin family. It depends on FMN as a cofactor.

This is an uncharacterized protein from Pyrococcus horikoshii (strain ATCC 700860 / DSM 12428 / JCM 9974 / NBRC 100139 / OT-3).